Reading from the N-terminus, the 315-residue chain is Alpha- and gamma-adaptin-binding protein p34 (315 aa).

The segment at 197–233 is disordered; sequence IGSADPCHPEQPHLPAADRTESLSDHRGGASNTTDAQ. The segment covering 203-224 has biased composition (basic and acidic residues); sequence CHPEQPHLPAADRTESLSDHRG. Residues Ser310 and Ser311 each carry the phosphoserine modification.

Associated with AP-1 and AP-2 complexes.

It localises to the cytoplasm. The protein resides in the cytosol. Functionally, may be involved in endocytic recycling of growth factor receptors such as EGFR. The chain is Alpha- and gamma-adaptin-binding protein p34 (AAGAB) from Pongo abelii (Sumatran orangutan).